The chain runs to 272 residues: Soluble interferon gamma receptor OPG193 (272 aa).

Positions 1-13 (MRYIIILAVLFIN) are cleaved as a signal peptide. N-linked (GlcNAc...) asparagine; by host glycosylation is found at N42, N150, and N267.

Belongs to the type II cytokine receptor family. As to quaternary structure, homodimer. Interacts with host IFNG.

The protein localises to the secreted. Functionally, counteracts the antiviral effects of host IFN-gamma. Acts as a soluble IFN-gamma receptor and thus inhibits the interaction between host IFN-gamma and its receptor. The chain is Soluble interferon gamma receptor OPG193 (OPG193) from Homo sapiens (Human).